We begin with the raw amino-acid sequence, 101 residues long: MTSKLAIALLAAFLLSAALCKAAVLSRMTSELRCQCINIHSTPFHPKFIRELRVIESGPHCENSEIIVKLVNGKEVCLNPKEKWVQKVVQIFLKRAEKKDP.

Positions 1–22 are cleaved as a signal peptide; sequence MTSKLAIALLAAFLLSAALCKA. Arg-27 is subject to Citrulline. Disulfide bonds link Cys-34/Cys-61 and Cys-36/Cys-77.

This sequence belongs to the intercrine alpha (chemokine CxC) family. Homodimer. Post-translationally, citrullination at Arg-27 prevents proteolysis, and dampens tissue inflammation, it also enhances leukocytosis, possibly through impaired chemokine clearance from the blood circulation.

It localises to the secreted. Functionally, chemotactic factor that mediates inflammatory response by attracting neutrophils, basophils, and T-cells to clear pathogens and protect the host from infection. Also plays an important role in neutrophil activation. Released in response to an inflammatory stimulus, exerts its effect by binding to the G-protein-coupled receptors CXCR1 and CXCR2, primarily found in neutrophils, monocytes and endothelial cells. G-protein heterotrimer (alpha, beta, gamma subunits) constitutively binds to CXCR1/CXCR2 receptor and activation by IL8 leads to beta and gamma subunits release from Galpha (GNAI2 in neutrophils) and activation of several downstream signaling pathways including PI3K and MAPK pathways. The polypeptide is Interleukin-8 (CXCL8) (Tursiops truncatus (Atlantic bottle-nosed dolphin)).